The primary structure comprises 246 residues: Large ribosomal subunit protein uL2 (246 aa).

Positions 196–226 (MSPYAHPHGGGSHQKGGTPVPKTAPPGQKVG) are disordered.

Belongs to the universal ribosomal protein uL2 family. As to quaternary structure, part of the 50S ribosomal subunit. Forms a bridge to the 30S subunit in the 70S ribosome.

In terms of biological role, one of the primary rRNA binding proteins. Required for association of the 30S and 50S subunits to form the 70S ribosome, for tRNA binding and peptide bond formation. It has been suggested to have peptidyltransferase activity; this is somewhat controversial. Makes several contacts with the 16S rRNA in the 70S ribosome. This Pyrobaculum arsenaticum (strain DSM 13514 / JCM 11321 / PZ6) protein is Large ribosomal subunit protein uL2.